The following is a 148-amino-acid chain: 3-dehydroquinate dehydratase (148 aa).

The Proton acceptor role is filled by Y23. 3 residues coordinate substrate: N75, H81, and D88. Catalysis depends on H101, which acts as the Proton donor. Residues 102 to 103 (LS) and R112 each bind substrate.

Belongs to the type-II 3-dehydroquinase family. As to quaternary structure, homododecamer.

The catalysed reaction is 3-dehydroquinate = 3-dehydroshikimate + H2O. Its pathway is metabolic intermediate biosynthesis; chorismate biosynthesis; chorismate from D-erythrose 4-phosphate and phosphoenolpyruvate: step 3/7. Its function is as follows. Catalyzes a trans-dehydration via an enolate intermediate. The sequence is that of 3-dehydroquinate dehydratase from Cellvibrio japonicus (strain Ueda107) (Pseudomonas fluorescens subsp. cellulosa).